Here is a 668-residue protein sequence, read N- to C-terminus: MDPSADTWDLSSPLISLWINRFYIYLGFAVSISLWICVQIVIEMQGFATVLAEAVTSLDLPVAIINLKEYDPDDHLIEEVTSKNVCVFLVATYTDGLPTESAEWFCKWLEEASIDFRFGKTYLKGMRDAVFGLGNSAYASHFNKVGKNVDKWLWMLGVHRVMSRGEGDCDVVKSKHGSIEANFRAWKTKFISQLQALQKGERKKSCGGHCKKGKCESHQHGSEEREEGSQEQDELHHRDTKEEEPFESSSEEEFGGEDHQSLNSIVDVEDLGKIMDHVKKEKREKEQQEEKSGLFRNMGRNEDGERRAMITPALREALTKQVDAPRERSLLQTHILWNESHRCMETTPSLACANKCVFCWWHHNNPVGTEWLWKMDQPEMILKEAIENHQNMIKQFKGVPGVKAERFEEGMTVKHCALSLVGEPIMYPEINRFLKLLHQCKISSFLVTNAQFPAEIRNLEPVTQLYVSVDASTKDSLKKIDRPLFKDFWQQFLDSLKALAVKQQRTVYRLMLVKAWNVDELQAYAQLVSLGNPDFIEVKGVTYCRESSASSLTMAHVPWHEEVVQFVRELVDLIPEYEIACEHEHSNCLLIAHRKFKIGGEWWTWIDYNRFQELIQEYEDSGGSKTFSAKDYMARTPHWALFGANERSFDPKDTRHQRKNKSKAISGC.

Positions 37–191 (CVQIVIEMQG…NFRAWKTKFI (155 aa)) constitute a Flavodoxin-like domain. FMN is bound by residues 43–47 (EMQGF) and 130–162 (VFGLGNSAYASHFNKVGKNVDKWLWMLGVHRVM). Residues 202–269 (RKKSCGGHCK…QSLNSIVDVE (68 aa)) form a disordered region. Basic and acidic residues-rich tracts occupy residues 213–223 (GKCESHQHGSE) and 233–243 (DELHHRDTKEE). Residues 244–255 (EPFESSSEEEFG) are compositionally biased toward acidic residues. The Radical SAM core domain occupies 336–580 (LWNESHRCME…VDLIPEYEIA (245 aa)). 3 residues coordinate [4Fe-4S] cluster: cysteine 352, cysteine 356, and cysteine 359.

Belongs to the TYW1 family. [4Fe-4S] cluster is required as a cofactor.

The catalysed reaction is N(1)-methylguanosine(37) in tRNA(Phe) + pyruvate + S-adenosyl-L-methionine = 4-demethylwyosine(37) in tRNA(Phe) + 5'-deoxyadenosine + L-methionine + CO2 + H2O. The protein operates within tRNA modification; wybutosine-tRNA(Phe) biosynthesis. Probable component of the wybutosine biosynthesis pathway. Wybutosine is a hyper modified guanosine with a tricyclic base found at the 3'-position adjacent to the anticodon of eukaryotic phenylalanine tRNA. Catalyzes the condensation of N-methylguanine with 2 carbon atoms from pyruvate to form the tricyclic 4-demethylwyosine, an intermediate in wybutosine biosynthesis. This is S-adenosyl-L-methionine-dependent tRNA 4-demethylwyosine synthase TYW1B (TYW1B) from Homo sapiens (Human).